A 123-amino-acid polypeptide reads, in one-letter code: UPF0102 protein Csal_2201 (123 aa).

Belongs to the UPF0102 family.

This chain is UPF0102 protein Csal_2201, found in Chromohalobacter salexigens (strain ATCC BAA-138 / DSM 3043 / CIP 106854 / NCIMB 13768 / 1H11).